The sequence spans 223 residues: Deoxyribose-phosphate aldolase (223 aa).

D92 acts as the Proton donor/acceptor in catalysis. The active-site Schiff-base intermediate with acetaldehyde is the K154. K182 acts as the Proton donor/acceptor in catalysis.

The protein belongs to the DeoC/FbaB aldolase family. DeoC type 1 subfamily.

The protein resides in the cytoplasm. The enzyme catalyses 2-deoxy-D-ribose 5-phosphate = D-glyceraldehyde 3-phosphate + acetaldehyde. It functions in the pathway carbohydrate degradation; 2-deoxy-D-ribose 1-phosphate degradation; D-glyceraldehyde 3-phosphate and acetaldehyde from 2-deoxy-alpha-D-ribose 1-phosphate: step 2/2. In terms of biological role, catalyzes a reversible aldol reaction between acetaldehyde and D-glyceraldehyde 3-phosphate to generate 2-deoxy-D-ribose 5-phosphate. This is Deoxyribose-phosphate aldolase from Pasteurella multocida (strain Pm70).